Reading from the N-terminus, the 103-residue chain is Sec-independent protein translocase protein TatA (103 aa).

The chain crosses the membrane as a helical span at residues 1-21 (MGNIFSPTHLIVILLIVLVLF). The interval 60–103 (YSKTTDVRPQQSQPLSVKRAAERRKGSSSFKEGKASVAKKQRGK) is disordered.

This sequence belongs to the TatA/E family. As to quaternary structure, the Tat system comprises two distinct complexes: a TatABC complex, containing multiple copies of TatA, TatB and TatC subunits, and a separate TatA complex, containing only TatA subunits. Substrates initially bind to the TatABC complex, which probably triggers association of the separate TatA complex to form the active translocon.

Its subcellular location is the cell inner membrane. Part of the twin-arginine translocation (Tat) system that transports large folded proteins containing a characteristic twin-arginine motif in their signal peptide across membranes. TatA could form the protein-conducting channel of the Tat system. In Bartonella quintana (strain Toulouse) (Rochalimaea quintana), this protein is Sec-independent protein translocase protein TatA.